Here is a 451-residue protein sequence, read N- to C-terminus: Tryptophan--tRNA ligase (451 aa).

Residues 10–12 (TTT) and 18–19 (GN) contribute to the ATP site. Positions 11–19 (TTGTPHLGN) match the 'HIGH' region motif. Asp-143 serves as a coordination point for L-tryptophan. ATP-binding positions include 155–157 (GRD), Leu-195, and 202–206 (KMSKS). The short motif at 202–206 (KMSKS) is the 'KMSKS' region element.

The protein belongs to the class-I aminoacyl-tRNA synthetase family. As to quaternary structure, homodimer.

It localises to the cytoplasm. The enzyme catalyses tRNA(Trp) + L-tryptophan + ATP = L-tryptophyl-tRNA(Trp) + AMP + diphosphate + H(+). Its function is as follows. Catalyzes the attachment of tryptophan to tRNA(Trp). The polypeptide is Tryptophan--tRNA ligase (Bordetella bronchiseptica (strain ATCC BAA-588 / NCTC 13252 / RB50) (Alcaligenes bronchisepticus)).